A 453-amino-acid chain; its full sequence is Methionine aminopeptidase 2-1 (453 aa).

Basic and acidic residues predominate over residues Met-1–Ser-12. The interval Met-1–Thr-101 is disordered. A compositionally biased stretch (acidic residues) spans Gly-46 to Glu-57. Residues Lys-67 to Lys-82 are compositionally biased toward basic residues. Position 210 (His-210) interacts with substrate. A divalent metal cation-binding residues include Asp-231, Asp-242, and His-306. Position 314 (His-314) interacts with substrate. A divalent metal cation is bound by residues Glu-339 and Glu-434.

Belongs to the peptidase M24A family. Methionine aminopeptidase eukaryotic type 2 subfamily. Requires Co(2+) as cofactor. The cofactor is Zn(2+). Mn(2+) is required as a cofactor. It depends on Fe(2+) as a cofactor.

Its subcellular location is the cytoplasm. The enzyme catalyses Release of N-terminal amino acids, preferentially methionine, from peptides and arylamides.. In terms of biological role, cotranslationally removes the N-terminal methionine from nascent proteins. The N-terminal methionine is often cleaved when the second residue in the primary sequence is small and uncharged (Met-Ala-, Cys, Gly, Pro, Ser, Thr, or Val). This is Methionine aminopeptidase 2-1 from Aspergillus terreus (strain NIH 2624 / FGSC A1156).